Consider the following 426-residue polypeptide: Tol-Pal system protein TolB (426 aa).

The N-terminal stretch at 1 to 25 is a signal peptide; that stretch reads MNILLSRFRLLLAAALAALSWGAQA.

The protein belongs to the TolB family. In terms of assembly, the Tol-Pal system is composed of five core proteins: the inner membrane proteins TolA, TolQ and TolR, the periplasmic protein TolB and the outer membrane protein Pal. They form a network linking the inner and outer membranes and the peptidoglycan layer.

The protein localises to the periplasm. Functionally, part of the Tol-Pal system, which plays a role in outer membrane invagination during cell division and is important for maintaining outer membrane integrity. In Aromatoleum aromaticum (strain DSM 19018 / LMG 30748 / EbN1) (Azoarcus sp. (strain EbN1)), this protein is Tol-Pal system protein TolB.